The primary structure comprises 159 residues: Putative polyketide cyclase (159 aa).

The protein to polyketide cyclases.

In terms of biological role, involved in developmentally regulated synthesis of a compound biosynthetically related to polyketide antibiotics which is essential for spore color in Streptomyces coelicolor. The sequence is that of Putative polyketide cyclase from Streptomyces coelicolor (strain ATCC BAA-471 / A3(2) / M145).